A 98-amino-acid chain; its full sequence is UPF0213 protein LACR_2011 (98 aa).

The region spanning 2 to 79 (NTHFTYVLQC…KLVRQQKLKL (78 aa)) is the GIY-YIG domain.

The protein belongs to the UPF0213 family.

The sequence is that of UPF0213 protein LACR_2011 from Lactococcus lactis subsp. cremoris (strain SK11).